Consider the following 400-residue polypeptide: Inosine-5'-monophosphate dehydrogenase (400 aa).

The span at 96–116 (KNESTPDQNLDKESTDGKDTK) shows a compositional bias: basic and acidic residues. Residues 96 to 125 (KNESTPDQNLDKESTDGKDTKSNNNIDAYS) are disordered. NAD(+) contacts are provided by residues D163 and 212–214 (GIG). The K(+) site is built by G214 and G216. S217 contributes to the IMP binding site. C219 is a binding site for K(+). The active-site Thioimidate intermediate is C219. Residues 252–254 (DGG), 275–276 (GS), and 299–303 (YRGMG) each bind IMP. R315 (proton acceptor) is an active-site residue. Residue E329 coordinates IMP. Residues E383, S384, and H385 each contribute to the K(+) site.

Belongs to the IMPDH/GMPR family. Homotetramer. K(+) is required as a cofactor.

The protein resides in the cytoplasm. The enzyme catalyses IMP + NAD(+) + H2O = XMP + NADH + H(+). It functions in the pathway purine metabolism; XMP biosynthesis via de novo pathway; XMP from IMP: step 1/1. With respect to regulation, mycophenolic acid (MPA) is a non-competitive inhibitor that prevents formation of the closed enzyme conformation by binding to the same site as the amobile flap. In contrast, mizoribine monophosphate (MZP) is a competitive inhibitor that induces the closed conformation. MPA is a potent inhibitor of mammalian IMPDHs but a poor inhibitor of the bacterial enzymes. MZP is a more potent inhibitor of bacterial IMPDH. Resistant to mycophenolic acid (MPA) inhibition. Its function is as follows. Catalyzes the conversion of inosine 5'-phosphate (IMP) to xanthosine 5'-phosphate (XMP), the first committed and rate-limiting step in the de novo synthesis of guanine nucleotides, and therefore plays an important role in the regulation of cell growth. The chain is Inosine-5'-monophosphate dehydrogenase from Cryptosporidium parvum.